The primary structure comprises 563 residues: GTPase Obg (563 aa).

The 167-residue stretch at 2–168 (SDFVDRVTVH…RDVILELKSI (167 aa)) folds into the Obg domain. The 181-residue stretch at 169-349 (ADVALVGFPS…LNFALSALVH (181 aa)) folds into the OBG-type G domain. Residues 175–182 (GFPSAGKS), 200–204 (FTTLV), 221–224 (DVPG), 301–304 (NKID), and 330–332 (STA) each bind GTP. Residues Ser182 and Thr202 each coordinate Mg(2+). One can recognise an OCT domain in the interval 383–469 (DEGGSALEFT…ARMVEFDWDP (87 aa)). A disordered region spans residues 529 to 563 (RKAGHWADPTVDDDRHDETSLFGHGESSEDGETEE).

Belongs to the TRAFAC class OBG-HflX-like GTPase superfamily. OBG GTPase family. Monomer. Requires Mg(2+) as cofactor.

The protein resides in the cytoplasm. An essential GTPase which binds GTP, GDP and possibly (p)ppGpp with moderate affinity, with high nucleotide exchange rates and a fairly low GTP hydrolysis rate. Plays a role in control of the cell cycle, stress response, ribosome biogenesis and in those bacteria that undergo differentiation, in morphogenesis control. This Bifidobacterium longum (strain NCC 2705) protein is GTPase Obg.